The following is a 48-amino-acid chain: Large ribosomal subunit protein eL40 (48 aa).

The protein belongs to the eukaryotic ribosomal protein eL40 family.

In Methanocella arvoryzae (strain DSM 22066 / NBRC 105507 / MRE50), this protein is Large ribosomal subunit protein eL40.